We begin with the raw amino-acid sequence, 475 residues long: Aspartyl/glutamyl-tRNA(Asn/Gln) amidotransferase subunit B (475 aa).

Belongs to the GatB/GatE family. GatB subfamily. As to quaternary structure, heterotrimer of A, B and C subunits.

It catalyses the reaction L-glutamyl-tRNA(Gln) + L-glutamine + ATP + H2O = L-glutaminyl-tRNA(Gln) + L-glutamate + ADP + phosphate + H(+). The catalysed reaction is L-aspartyl-tRNA(Asn) + L-glutamine + ATP + H2O = L-asparaginyl-tRNA(Asn) + L-glutamate + ADP + phosphate + 2 H(+). In terms of biological role, allows the formation of correctly charged Asn-tRNA(Asn) or Gln-tRNA(Gln) through the transamidation of misacylated Asp-tRNA(Asn) or Glu-tRNA(Gln) in organisms which lack either or both of asparaginyl-tRNA or glutaminyl-tRNA synthetases. The reaction takes place in the presence of glutamine and ATP through an activated phospho-Asp-tRNA(Asn) or phospho-Glu-tRNA(Gln). This is Aspartyl/glutamyl-tRNA(Asn/Gln) amidotransferase subunit B from Chlorobaculum tepidum (strain ATCC 49652 / DSM 12025 / NBRC 103806 / TLS) (Chlorobium tepidum).